The chain runs to 445 residues: MIPVIALVGRPNVGKSTLFNQLTRSRDALVADYPGLTRDRKYGDGKLGEHEFIVIDTGGISGDEQGIDEKMARQSLLAIEEADVVLFLVDGRHGLNPADEMIASHLRRSNKQVSLVVNKTDGINEDIALADFYSLGFGELHPIAASHGKGVHVLIDKVMLPFAERVEEAKNQISIESRGIRIGVVGRPNVGKSTLVNRMLGEDRVVVYDMPGTTRDSVYIPYVRNDKEYTLIDTAGIRRRKHVKEAVEKFSIVKALQAIQDANVVIVVIDSHENLVEQDLHMIGYVLDAGRGVIIAINKWDGLKKDDREHIKSEVERRLGFVPYAKVHYISALHGTGVGDLYDTIESTYESCYAKWTTNRLTRILEDSIAEHQPPMVNSRRIKLRYAHQGGSNPPRIVVHGNQTDSLPGSYKRYLENKFRTVLNITGTPIIFEFKSAENPFAPKK.

2 EngA-type G domains span residues 3-166 (PVIA…AERV) and 180-353 (IRIG…ESCY). Residues 9–16 (GRPNVGKS), 56–60 (DTGGI), 118–121 (NKTD), 186–193 (GRPNVGKS), 233–237 (DTAGI), and 298–301 (NKWD) each bind GTP. Residues 354-438 (AKWTTNRLTR…PIIFEFKSAE (85 aa)) enclose the KH-like domain.

The protein belongs to the TRAFAC class TrmE-Era-EngA-EngB-Septin-like GTPase superfamily. EngA (Der) GTPase family. Associates with the 50S ribosomal subunit.

Functionally, GTPase that plays an essential role in the late steps of ribosome biogenesis. This chain is GTPase Der, found in Marinomonas sp. (strain MWYL1).